A 538-amino-acid chain; its full sequence is MFRRNIITSAILLMAPLAFSAQSLAESLTVEQRLELLEKALRETQSELKKYKDEEKKKYTPATVNRSVSTNDQGYAANPFPTSHAAKPDAVLVKNEEKNASETGSIYSSMTLKDFSKFVKDEIGFSYNGYYRSGWGTASHGSPKSWAIGSLGRFGNEYSGWFDLQLKQRVYNENGKRVDAIVMMDGNVGQQYSTGWFGDNAGGENFMQFSDMYVTTKGFLPFAPEADFWVGKHGAPKIEIQMLDWKTQRTDAAAGVGLENWKVGPGKIDIALVREDVDDYDRSLQNKQQINTNTIDLRYKDIPLWDKATLMVSGRYVSANESASEKDNQDNNGYYDWKDTWMFGTSLTQKFDKGGFNEFSFLVANNSIASNFGRYAGASPFTTFNGRYYGDHTGGTAVRLTSQGEAYIGDHFIVANAIVYSFGNDIYSYETGAHSDFESIRAVVRPAYIWDQYNQTGVELGYFTQQNKDANSNKYNESGYKTTLFHTFKVNTSMLTSRPEIRFYTTYIKALENELDGFTFEDNKDDQFAVGAQAEIWW.

An N-terminal signal peptide occupies residues 1–25 (MFRRNIITSAILLMAPLAFSAQSLA).

It belongs to the porin LamB (TC 1.B.3) family.

Its subcellular location is the cell outer membrane. May be a sugar porin with a broad carbohydrate specificity. This is Putative outer membrane porin BglH (bglH) from Escherichia coli O6:K15:H31 (strain 536 / UPEC).